A 937-amino-acid chain; its full sequence is Aconitate hydratase A (937 aa).

Positions 439, 505, and 508 each coordinate [4Fe-4S] cluster. The tract at residues 898 to 921 (KKESKSTQSTTSKGCGSADTSSET) is disordered.

This sequence belongs to the aconitase/IPM isomerase family. As to quaternary structure, monomer. [4Fe-4S] cluster serves as cofactor.

It catalyses the reaction citrate = D-threo-isocitrate. The enzyme catalyses (2S,3R)-3-hydroxybutane-1,2,3-tricarboxylate = 2-methyl-cis-aconitate + H2O. It functions in the pathway carbohydrate metabolism; tricarboxylic acid cycle; isocitrate from oxaloacetate: step 2/2. The protein operates within organic acid metabolism; propanoate degradation. Functionally, involved in the catabolism of short chain fatty acids (SCFA) via the tricarboxylic acid (TCA)(acetyl degradation route) and probably the 2-methylcitrate cycle I (propionate degradation route). Catalyzes the reversible isomerization of citrate to isocitrate via cis-aconitate. Could catalyze the hydration of 2-methyl-cis-aconitate to yield (2R,3S)-2-methylisocitrate. The apo form of AcnA functions as a RNA-binding regulatory protein. This Francisella tularensis subsp. holarctica (strain LVS) protein is Aconitate hydratase A (acn).